Consider the following 346-residue polypeptide: Protein RecA (346 aa).

ATP is bound at residue 67–74; the sequence is GPESSGKT.

Belongs to the RecA family.

The protein resides in the cytoplasm. Can catalyze the hydrolysis of ATP in the presence of single-stranded DNA, the ATP-dependent uptake of single-stranded DNA by duplex DNA, and the ATP-dependent hybridization of homologous single-stranded DNAs. It interacts with LexA causing its activation and leading to its autocatalytic cleavage. The polypeptide is Protein RecA (Mycobacterium ulcerans (strain Agy99)).